The chain runs to 113 residues: Large ribosomal subunit protein uL24 (113 aa).

It belongs to the universal ribosomal protein uL24 family. As to quaternary structure, part of the 50S ribosomal subunit.

One of two assembly initiator proteins, it binds directly to the 5'-end of the 23S rRNA, where it nucleates assembly of the 50S subunit. In terms of biological role, one of the proteins that surrounds the polypeptide exit tunnel on the outside of the subunit. This is Large ribosomal subunit protein uL24 from Rickettsia typhi (strain ATCC VR-144 / Wilmington).